We begin with the raw amino-acid sequence, 213 residues long: Na(+)-translocating NADH-quinone reductase subunit D (213 aa).

Transmembrane regions (helical) follow at residues 22-42 (LIAILGICSALAVTTTVTTAL), 43-63 (TMGFAVSFVTGCSSFVVSLLR), 77-97 (IIISLFVILIDQFLKAFFFTI), 101-121 (LSVFVGLIITNCIVMGRAESM), 131-151 (FLDGLGSGLGYGWVLVCISII), and 183-203 (LGLMVLAPSAFFLLGIMIWIV).

The protein belongs to the NqrDE/RnfAE family. Composed of six subunits; NqrA, NqrB, NqrC, NqrD, NqrE and NqrF.

The protein resides in the cell inner membrane. It catalyses the reaction a ubiquinone + n Na(+)(in) + NADH + H(+) = a ubiquinol + n Na(+)(out) + NAD(+). NQR complex catalyzes the reduction of ubiquinone-1 to ubiquinol by two successive reactions, coupled with the transport of Na(+) ions from the cytoplasm to the periplasm. NqrA to NqrE are probably involved in the second step, the conversion of ubisemiquinone to ubiquinol. The chain is Na(+)-translocating NADH-quinone reductase subunit D from Chlamydia trachomatis serovar A (strain ATCC VR-571B / DSM 19440 / HAR-13).